Here is a 303-residue protein sequence, read N- to C-terminus: MTLRHISVLKEEAISFLNINPNGVYVDATLGQGGHTLSILNHLQDGFLYSFDQDLKACSDIQKKLNPNWPIEIIHSNFSNLKLELAKRNVFQLDGILFDLGISSCQIDDSQRGFSYLHNAPLDMRFDNRQKLTAQEIVNFYSFEKLKNIFHIYGEEKKAALIAKQIIKNRPLKTSYDLVAITDMFYKYHKGHSAKKIFQALRIEVNQELEVLKQALSQSLELLKKDGSIVVISFHSLEDRIVKHFFKKNSVFEFPKKLPIMSVDYPQPALRIITKKPCIPSEVEMKNNPRSISAKLRAAVKNI.

Residues 33-35 (GGH), Asp-52, Phe-78, Asp-99, and Gln-106 each bind S-adenosyl-L-methionine.

This sequence belongs to the methyltransferase superfamily. RsmH family.

It localises to the cytoplasm. It carries out the reaction cytidine(1402) in 16S rRNA + S-adenosyl-L-methionine = N(4)-methylcytidine(1402) in 16S rRNA + S-adenosyl-L-homocysteine + H(+). Specifically methylates the N4 position of cytidine in position 1402 (C1402) of 16S rRNA. This Phytoplasma australiense protein is Ribosomal RNA small subunit methyltransferase H.